A 547-amino-acid polypeptide reads, in one-letter code: Inositol-tetrakisphosphate 1-kinase 6 (547 aa).

Lys263 contacts 1D-myo-inositol 1,3,4-trisphosphate. Residues Arg317 and Lys370 each contribute to the ATP site. An ATP-grasp domain is found at 327–539 (LEGLSAEGRP…FWDAIKQSYE (213 aa)). 2 residues coordinate 1D-myo-inositol 1,3,4-trisphosphate: His381 and Lys415. ATP is bound by residues 404 to 415 (QEYIDHGSKIFK), Ser430, and Ser450. Mg(2+) is bound by residues Asp497, Asp511, and Asn513. The 1D-myo-inositol 1,3,4-trisphosphate site is built by Asn513 and Ser517.

The protein belongs to the ITPK1 family. In terms of assembly, monomer. Mg(2+) serves as cofactor.

The enzyme catalyses 1D-myo-inositol 3,4,5,6-tetrakisphosphate + ATP = 1D-myo-inositol 1,3,4,5,6-pentakisphosphate + ADP + H(+). The catalysed reaction is 1D-myo-inositol 1,3,4-trisphosphate + ATP = 1D-myo-inositol 1,3,4,5-tetrakisphosphate + ADP + H(+). It catalyses the reaction 1D-myo-inositol 1,3,4-trisphosphate + ATP = 1D-myo-inositol 1,3,4,6-tetrakisphosphate + ADP + H(+). In terms of biological role, kinase that can phosphorylate various inositol polyphosphate such as Ins(3,4,5,6)P4 or Ins(1,3,4)P3 and participates in phytic acid biosynthesis in developing seeds. Phytic acid is the primary storage form of phosphorus in cereal grains and other plant seeds. The sequence is that of Inositol-tetrakisphosphate 1-kinase 6 from Oryza sativa subsp. indica (Rice).